A 316-amino-acid polypeptide reads, in one-letter code: Ornithine carbamoyltransferase (316 aa).

Residues serine 59 to threonine 62, glutamine 86, arginine 110, and histidine 137 to glutamine 140 contribute to the carbamoyl phosphate site. L-ornithine contacts are provided by residues asparagine 168, aspartate 232, and serine 236–methionine 237. Residues cysteine 273–leucine 274 and arginine 301 contribute to the carbamoyl phosphate site.

It belongs to the aspartate/ornithine carbamoyltransferase superfamily. OTCase family.

It is found in the cytoplasm. It carries out the reaction carbamoyl phosphate + L-ornithine = L-citrulline + phosphate + H(+). It participates in amino-acid biosynthesis; L-arginine biosynthesis; L-arginine from L-ornithine and carbamoyl phosphate: step 1/3. Its function is as follows. Reversibly catalyzes the transfer of the carbamoyl group from carbamoyl phosphate (CP) to the N(epsilon) atom of ornithine (ORN) to produce L-citrulline. The protein is Ornithine carbamoyltransferase of Listeria innocua serovar 6a (strain ATCC BAA-680 / CLIP 11262).